Consider the following 824-residue polypeptide: Ras guanine nucleotide exchange factor I (824 aa).

2 disordered regions span residues 1–51 (MSNP…KPTK) and 65–167 (GSNL…LILD). Positions 8–41 (SNSTNGSSNSLNGESVSPNRLGSSPGSPISKASS) are enriched in low complexity. The span at 83–95 (NSSVGLLNNSTGS) shows a compositional bias: polar residues. Residues 104-116 (SSPKSSYILSSSI) show a composition bias toward low complexity. Residues 117-128 (GSGGSGGGGGSS) show a composition bias toward gly residues. Residues 136–167 (SASNNSSGPRSRSGSLGKNNSSQQNNNNLILD) are compositionally biased toward low complexity. Residues 223 to 255 (GRDNILQLILQHLQFEGLMDSRKILEEEAKIQY) form the LisH domain. 2 disordered regions span residues 330 to 354 (YVDEKDNDKPSKDSPTTATTTTTAT) and 398 to 425 (NTQQQQATPNTPPQGLKSTQSITGSTGT). Over residues 331-341 (VDEKDNDKPSK) the composition is skewed to basic and acidic residues. The span at 343-354 (SPTTATTTTTAT) shows a compositional bias: low complexity. Over residues 413–425 (LKSTQSITGSTGT) the composition is skewed to polar residues. Residues 426 to 551 (LGPQVKAASL…VISDALNSGL (126 aa)) form the N-terminal Ras-GEF domain. Residues 585-816 (DEEEISRQLT…YTRSMSFEPR (232 aa)) form the Ras-GEF domain.

Functionally, promotes the exchange of Ras-bound GDP by GTP. This Dictyostelium discoideum (Social amoeba) protein is Ras guanine nucleotide exchange factor I (gefI).